The chain runs to 744 residues: TonB-dependent heme receptor A (744 aa).

The signal sequence occupies residues 1–24 (MNILINKRIFLLVTLVGIQLNVTA). The region spanning 45-157 (DDSNKLPGRS…FAGTVKFETK (113 aa)) is the TBDR plug domain. Residues 168 to 744 (KIGGFLKYGN…NIKFSLSQKF (577 aa)) form the TBDR beta-barrel domain.

It belongs to the TonB-dependent receptor family.

It is found in the cell outer membrane. Its function is as follows. Heme receptor. The chain is TonB-dependent heme receptor A (tdhA) from Haemophilus influenzae (strain ATCC 51907 / DSM 11121 / KW20 / Rd).